The sequence spans 164 residues: Inner membrane assembly complex subunit 17 (164 aa).

The transit peptide at Met1 to Arg28 directs the protein to the mitochondrion. Topologically, residues Ser29–Arg97 are mitochondrial matrix. A helical transmembrane segment spans residues Pro98–Trp118. The Mitochondrial intermembrane portion of the chain corresponds to Lys119–Trp164. Residues Ala121–Thr149 adopt a coiled-coil conformation.

The protein belongs to the INA17 family. As to quaternary structure, component of the inner membrane assembly (INA) complex, composed of INA17 and INA22. Interacts with a subset of F(1)F(0)-ATP synthase subunits of the F(1)-domain and the peripheral stalk.

The protein localises to the mitochondrion inner membrane. Component of the INA complex (INAC) that promotes the biogenesis of mitochondrial F(1)F(0)-ATP synthase. INAC facilitates the assembly of the peripheral stalk and promotes the assembly of the catalytic F(1)-domain with the membrane-embedded F(0)-domain. This Candida glabrata (strain ATCC 2001 / BCRC 20586 / JCM 3761 / NBRC 0622 / NRRL Y-65 / CBS 138) (Yeast) protein is Inner membrane assembly complex subunit 17.